A 364-amino-acid polypeptide reads, in one-letter code: Anthranilate N-methyltransferase (364 aa).

The segment at 1–20 is disordered; sequence MGSLSESHTQYKHGVEVEED. S-adenosyl-L-methionine-binding residues include glycine 209, aspartate 232, methionine 253, and lysine 266. Histidine 270 functions as the Proton acceptor in the catalytic mechanism.

Belongs to the class I-like SAM-binding methyltransferase superfamily. Cation-independent O-methyltransferase family. COMT subfamily. As to quaternary structure, homodimer. In terms of tissue distribution, expressed in leaves, flowers, stems and roots. Detected in the vascular tissues in stems, in the rhizodermis or the endodermis of roots, in the inside of carpels, in the central vascular bundles of the syncarp ovary and in the secretory oil glands located around the outer ovary wall.

It catalyses the reaction anthranilate + S-adenosyl-L-methionine = N-methylanthranilate + S-adenosyl-L-homocysteine + H(+). Its activity is regulated as follows. Inhibited by Ca(2+), Co(2+), Fe(2+), Fe(3+), Cu(2+) or Zn(2+). No effect of Mg(2+). Its function is as follows. Involved in the biosynthesis of acridine alkaloids. N-methyltransferase with a strict substrate specificity for anthranilate. No activity with anthranilic acid methyl ester, anthraniloyl CoA, 3- or 4-amino-benzoic acid, salicylic acid, catechol, eugenol, caffeic acid, quercetin, theobromin, theophyllin, putrescine and nicotinic acid among others. In Ruta graveolens (Common rue), this protein is Anthranilate N-methyltransferase.